The primary structure comprises 267 residues: Tryptophan synthase alpha chain (267 aa).

Residues Glu44 and Asp55 each act as proton acceptor in the active site.

Belongs to the TrpA family. As to quaternary structure, tetramer of two alpha and two beta chains.

It carries out the reaction (1S,2R)-1-C-(indol-3-yl)glycerol 3-phosphate + L-serine = D-glyceraldehyde 3-phosphate + L-tryptophan + H2O. It functions in the pathway amino-acid biosynthesis; L-tryptophan biosynthesis; L-tryptophan from chorismate: step 5/5. The alpha subunit is responsible for the aldol cleavage of indoleglycerol phosphate to indole and glyceraldehyde 3-phosphate. The protein is Tryptophan synthase alpha chain of Coxiella burnetii (strain Dugway 5J108-111).